An 814-amino-acid chain; its full sequence is Phenylalanine--tRNA ligase beta subunit (814 aa).

One can recognise a tRNA-binding domain in the interval 39–153 (SARAKGVVVG…ELPALGAPVA (115 aa)). The 85-residue stretch at 414 to 498 (ADASSVLLRR…RLVGFDRFGA (85 aa)) folds into the B5 domain. Positions 476, 482, 485, and 486 each coordinate Mg(2+). The 94-residue stretch at 720–813 (PTVPASERDL…LVKQHGAELR (94 aa)) folds into the FDX-ACB domain.

Belongs to the phenylalanyl-tRNA synthetase beta subunit family. Type 1 subfamily. In terms of assembly, tetramer of two alpha and two beta subunits. Mg(2+) is required as a cofactor.

It localises to the cytoplasm. The catalysed reaction is tRNA(Phe) + L-phenylalanine + ATP = L-phenylalanyl-tRNA(Phe) + AMP + diphosphate + H(+). This Parasynechococcus marenigrum (strain WH8102) protein is Phenylalanine--tRNA ligase beta subunit.